A 551-amino-acid chain; its full sequence is L-lactate permease (551 aa).

Helical transmembrane passes span 13-33 (NIWLSSLIASLPILFFFFALI), 37-57 (LKGYVAASWTVVIALAVALLF), 69-89 (VVYGFFYGLWPIAWIIIAAVF), 131-151 (GAAGFGAPVAITAALLVGLGF), 159-179 (LCLIVNTAPVAFGAMGIPILV), 194-214 (MVGRQLPFLTIIVLFWIMAIM), 245-265 (IGPELPDIISSLVSLVCLTLF), 306-326 (FLFLTATVTLWSIPPFKALFA), 366-386 (FDWFSATGTAILFAALLSIVW), 405-425 (LALPIYSIGMVLAFAFISNYS), 438-458 (TGSAFTFFSPFLGWLGVFLTG), and 530-550 (IFTCMVGVITTLQAYVLTWMI).

It belongs to the lactate permease family.

The protein resides in the cell inner membrane. It carries out the reaction (S)-lactate(in) + H(+)(in) = (S)-lactate(out) + H(+)(out). The enzyme catalyses (R)-lactate(in) + H(+)(in) = (R)-lactate(out) + H(+)(out). It catalyses the reaction glycolate(in) + H(+)(in) = glycolate(out) + H(+)(out). Its function is as follows. Uptake of L-lactate across the membrane. Can also transport D-lactate and glycolate. Seems to be driven by a proton motive force. The protein is L-lactate permease (lldP) of Salmonella typhi.